The chain runs to 206 residues: N-(5'-phosphoribosyl)anthranilate isomerase (206 aa).

It belongs to the TrpF family.

The catalysed reaction is N-(5-phospho-beta-D-ribosyl)anthranilate = 1-(2-carboxyphenylamino)-1-deoxy-D-ribulose 5-phosphate. It participates in amino-acid biosynthesis; L-tryptophan biosynthesis; L-tryptophan from chorismate: step 3/5. This is N-(5'-phosphoribosyl)anthranilate isomerase from Pseudomonas savastanoi pv. phaseolicola (strain 1448A / Race 6) (Pseudomonas syringae pv. phaseolicola (strain 1448A / Race 6)).